The sequence spans 141 residues: Putative inactive deoxyuridine 5'-triphosphate nucleotidohydrolase-like protein FLJ16323 (141 aa).

This sequence belongs to the dUTPase family.

The polypeptide is Putative inactive deoxyuridine 5'-triphosphate nucleotidohydrolase-like protein FLJ16323 (Homo sapiens (Human)).